Consider the following 329-residue polypeptide: MQGSVTEFLKPRLVDIEQISSTHAKVILEPLERGFGHTLGNALRRILLSSMPGCAVTEVEIDGVLHEYSSKEGVQEDILEVLLNLKGLAVKVQNKDDVFLTLNKSGIGPVVAADITHDGDVEIVNPEHVICHLTDESASINMRIRVQRGRGYVPASARVHAQDEERPIGRLLVDACYSPVDRIAYNVEAARVEQRTDLDKLVIELETNGTIDPEEAIRRAATILAEQLDAFVDLRDVRQPEVKEEKPEFDPILLRPVDDLELTVRSANCLKAETIHYIGDLVQRTEVELLKTPNLGKKSLTEIKDVLASRGLSLGMRLENWPPASIAED.

Positions 1–235 (MQGSVTEFLK…EQLDAFVDLR (235 aa)) are alpha N-terminal domain (alpha-NTD). The interval 249-329 (FDPILLRPVD…NWPPASIAED (81 aa)) is alpha C-terminal domain (alpha-CTD).

The protein belongs to the RNA polymerase alpha chain family. Homodimer. The RNAP catalytic core consists of 2 alpha, 1 beta, 1 beta' and 1 omega subunit. When a sigma factor is associated with the core the holoenzyme is formed, which can initiate transcription.

The enzyme catalyses RNA(n) + a ribonucleoside 5'-triphosphate = RNA(n+1) + diphosphate. Functionally, DNA-dependent RNA polymerase catalyzes the transcription of DNA into RNA using the four ribonucleoside triphosphates as substrates. In Pasteurella multocida (strain Pm70), this protein is DNA-directed RNA polymerase subunit alpha.